A 509-amino-acid polypeptide reads, in one-letter code: Transmembrane protein 180 (509 aa).

Topologically, residues 1 to 10 are extracellular; that stretch reads MGLRLLACLF. Residues 11-42 traverse the membrane as a helical segment; that stretch reads HLPTAVIYGSLSLFVSILHNVFLLYYVDTFVS. Residues 43 to 54 lie on the Cytoplasmic side of the membrane; that stretch reads VYKIDKLSFWIG. A helical membrane pass occupies residues 55–73; it reads ETVFLIWNSLNDPLFGWLS. The Extracellular segment spans residues 74 to 98; the sequence is DRVFLSTQQPGAEISSPEVVLKRLR. A helical transmembrane segment spans residues 99 to 116; the sequence is ALSHNGPLFAISFLAFWV. Over 117-124 the chain is Cytoplasmic; that stretch reads AWAHPGLQ. The chain crosses the membrane as a helical span at residues 125–149; that stretch reads FLLCLCMYDSFLTMVDLHHNALLAD. At 150-153 the chain is on the extracellular side; sequence LAVS. The helical transmembrane segment at 154-177 threads the bilayer; the sequence is AKDRTSLNFYCSFFSAIGSLSVFM. The Cytoplasmic segment spans residues 178 to 189; sequence SYAVWNKEDFFS. A helical transmembrane segment spans residues 190–221; the sequence is FRIFCIVLAFCSIVGFTLSTQLLRQRFETDGK. The Extracellular segment spans residues 222–259; the sequence is AKWDQESTLKELYIEKLSVPQEKRITLVEYLQQLSRHR. Residues 260-287 form a helical membrane-spanning segment; that stretch reads NFLWFVCMNLIQVFHCHFNSNFFPLFLE. Residues 288–300 are Cytoplasmic-facing; that stretch reads HLLSDKISVSTGS. The chain crosses the membrane as a helical span at residues 301–320; sequence FLLGISYIAPHLNNLYFLSL. Residues 321-325 lie on the Extracellular side of the membrane; that stretch reads CRRWG. The chain crosses the membrane as a helical span at residues 326–345; sequence VYAVVRGLFFLKLALSVVML. Residues 346 to 353 lie on the Cytoplasmic side of the membrane; sequence LAGPDQVY. A helical membrane pass occupies residues 354-388; the sequence is LLCIFIASNRVFTEGTCKLLNLVVTDLVDEDLVLN. Topologically, residues 389–397 are extracellular; the sequence is RRKQAASAL. A helical membrane pass occupies residues 398–424; the sequence is LFGMVALVTKPGQTFAPLIGTWLLCVY. Residues 425 to 458 are Cytoplasmic-facing; sequence TGYDIFQRNPLSNVVSAQPKLESDTILEPTLRQG. Residues 459–477 traverse the membrane as a helical segment; sequence CFYLLVFVPITCALLQLLS. At 478 to 509 the chain is on the extracellular side; the sequence is WTQFSLHGKRLQMVKAQRQGLMQGRAPEIKMI.

It localises to the cell membrane. This chain is Transmembrane protein 180, found in Gallus gallus (Chicken).